Consider the following 366-residue polypeptide: Probable cinnamyl alcohol dehydrogenase 3 (366 aa).

Zn(2+) is bound at residue C53. Residue S55 participates in NADP(+) binding. The Zn(2+) site is built by H75, E76, C106, C109, C112, C120, and C169. Residues T173, G194–G199, S217–K222, T257, G281, and S304–I306 contribute to the NADP(+) site.

This sequence belongs to the zinc-containing alcohol dehydrogenase family. In terms of assembly, homodimer. The cofactor is Zn(2+).

It carries out the reaction (E)-cinnamyl alcohol + NADP(+) = (E)-cinnamaldehyde + NADPH + H(+). It catalyses the reaction (E)-coniferol + NADP(+) = (E)-coniferaldehyde + NADPH + H(+). The enzyme catalyses (E)-sinapyl alcohol + NADP(+) = (E)-sinapaldehyde + NADPH + H(+). The catalysed reaction is (E)-4-coumaroyl alcohol + NADP(+) = (E)-4-coumaraldehyde + NADPH + H(+). It carries out the reaction (E)-caffeyl alcohol + NADP(+) = (E)-caffeyl aldehyde + NADPH + H(+). It functions in the pathway aromatic compound metabolism; phenylpropanoid biosynthesis. Involved in lignin biosynthesis. Catalyzes the final step specific for the production of lignin monomers. Catalyzes the NADPH-dependent reduction of coniferaldehyde, 5-hydroxyconiferaldehyde, sinapaldehyde, 4-coumaraldehyde and caffeyl aldehyde to their respective alcohols. This Oryza sativa subsp. japonica (Rice) protein is Probable cinnamyl alcohol dehydrogenase 3.